Here is a 278-residue protein sequence, read N- to C-terminus: Formamidopyrimidine-DNA glycosylase (278 aa).

Catalysis depends on proline 2, which acts as the Schiff-base intermediate with DNA. Residue glutamate 3 is the Proton donor of the active site. Residue lysine 58 is the Proton donor; for beta-elimination activity of the active site. DNA is bound by residues histidine 91, arginine 109, and arginine 158. Residues 243–277 (KVYDRKGLPCKVCKTPISQMVQGQRTTYFCSQCQK) form an FPG-type zinc finger. Catalysis depends on arginine 267, which acts as the Proton donor; for delta-elimination activity.

It belongs to the FPG family. Monomer. It depends on Zn(2+) as a cofactor.

The enzyme catalyses Hydrolysis of DNA containing ring-opened 7-methylguanine residues, releasing 2,6-diamino-4-hydroxy-5-(N-methyl)formamidopyrimidine.. It catalyses the reaction 2'-deoxyribonucleotide-(2'-deoxyribose 5'-phosphate)-2'-deoxyribonucleotide-DNA = a 3'-end 2'-deoxyribonucleotide-(2,3-dehydro-2,3-deoxyribose 5'-phosphate)-DNA + a 5'-end 5'-phospho-2'-deoxyribonucleoside-DNA + H(+). Functionally, involved in base excision repair of DNA damaged by oxidation or by mutagenic agents. Acts as a DNA glycosylase that recognizes and removes damaged bases. Has a preference for oxidized purines, such as 7,8-dihydro-8-oxoguanine (8-oxoG). Has AP (apurinic/apyrimidinic) lyase activity and introduces nicks in the DNA strand. Cleaves the DNA backbone by beta-delta elimination to generate a single-strand break at the site of the removed base with both 3'- and 5'-phosphates. This chain is Formamidopyrimidine-DNA glycosylase, found in Polynucleobacter necessarius subsp. necessarius (strain STIR1).